A 37-amino-acid polypeptide reads, in one-letter code: Cytochrome b6-f complex subunit 5 (37 aa).

A helical membrane pass occupies residues 5–25; that stretch reads LLSGIVLGLIVVTLAGLFYAA.

This sequence belongs to the PetG family. The 4 large subunits of the cytochrome b6-f complex are cytochrome b6, subunit IV (17 kDa polypeptide, PetD), cytochrome f and the Rieske protein, while the 4 small subunits are PetG, PetL, PetM and PetN. The complex functions as a dimer.

It is found in the cellular thylakoid membrane. Component of the cytochrome b6-f complex, which mediates electron transfer between photosystem II (PSII) and photosystem I (PSI), cyclic electron flow around PSI, and state transitions. PetG is required for either the stability or assembly of the cytochrome b6-f complex. This is Cytochrome b6-f complex subunit 5 from Anabaena variabilis.